Here is a 164-residue protein sequence, read N- to C-terminus: Endoribonuclease YbeY (164 aa).

Zn(2+) contacts are provided by His-130, His-134, and His-140.

It belongs to the endoribonuclease YbeY family. Zn(2+) is required as a cofactor.

Its subcellular location is the cytoplasm. In terms of biological role, single strand-specific metallo-endoribonuclease involved in late-stage 70S ribosome quality control and in maturation of the 3' terminus of the 16S rRNA. The protein is Endoribonuclease YbeY of Streptococcus mutans serotype c (strain ATCC 700610 / UA159).